Reading from the N-terminus, the 214-residue chain is Adenylate kinase (214 aa).

An ATP-binding site is contributed by 10–15 (GAGKGT). Residues 30–59 (STGDMLRAAVKAGTPLGLEAKKVMDAGQLV) form an NMP region. AMP is bound by residues threonine 31, arginine 36, 57–59 (QLV), 85–88 (GFPR), and glutamine 92. The LID stretch occupies residues 122-159 (GRRVHPGSGRVYHIVFNQPKVEGKDDVTGEDLAIRPDD). ATP is bound by residues arginine 123 and 132–133 (VY). Arginine 156 and arginine 167 together coordinate AMP. An ATP-binding site is contributed by glutamine 200.

This sequence belongs to the adenylate kinase family. As to quaternary structure, monomer.

It localises to the cytoplasm. It carries out the reaction AMP + ATP = 2 ADP. Its pathway is purine metabolism; AMP biosynthesis via salvage pathway; AMP from ADP: step 1/1. Its function is as follows. Catalyzes the reversible transfer of the terminal phosphate group between ATP and AMP. Plays an important role in cellular energy homeostasis and in adenine nucleotide metabolism. This Shewanella halifaxensis (strain HAW-EB4) protein is Adenylate kinase.